A 270-amino-acid polypeptide reads, in one-letter code: Putative phosphoenolpyruvate synthase regulatory protein (270 aa).

Position 150–157 (150–157) interacts with ADP; the sequence is GVSRCGKT.

Belongs to the pyruvate, phosphate/water dikinase regulatory protein family. PSRP subfamily.

The enzyme catalyses [pyruvate, water dikinase] + ADP = [pyruvate, water dikinase]-phosphate + AMP + H(+). The catalysed reaction is [pyruvate, water dikinase]-phosphate + phosphate + H(+) = [pyruvate, water dikinase] + diphosphate. Its function is as follows. Bifunctional serine/threonine kinase and phosphorylase involved in the regulation of the phosphoenolpyruvate synthase (PEPS) by catalyzing its phosphorylation/dephosphorylation. In Shewanella denitrificans (strain OS217 / ATCC BAA-1090 / DSM 15013), this protein is Putative phosphoenolpyruvate synthase regulatory protein.